A 506-amino-acid chain; its full sequence is 2-isopropylmalate synthase (506 aa).

Residues 4-266 enclose the Pyruvate carboxyltransferase domain; that stretch reads ILFMDTTLRD…EPSMTLKEIK (263 aa). 4 residues coordinate Mn(2+): aspartate 13, histidine 201, histidine 203, and asparagine 237. The regulatory domain stretch occupies residues 390-506; that stretch reads NITQLQVHFV…KLKSFIQLVK (117 aa).

It belongs to the alpha-IPM synthase/homocitrate synthase family. LeuA type 1 subfamily. Homodimer. Mn(2+) serves as cofactor.

The protein localises to the cytoplasm. It catalyses the reaction 3-methyl-2-oxobutanoate + acetyl-CoA + H2O = (2S)-2-isopropylmalate + CoA + H(+). It functions in the pathway amino-acid biosynthesis; L-leucine biosynthesis; L-leucine from 3-methyl-2-oxobutanoate: step 1/4. Catalyzes the condensation of the acetyl group of acetyl-CoA with 3-methyl-2-oxobutanoate (2-ketoisovalerate) to form 3-carboxy-3-hydroxy-4-methylpentanoate (2-isopropylmalate). This chain is 2-isopropylmalate synthase, found in Bacillus cereus (strain ZK / E33L).